The following is a 398-amino-acid chain: Substance-K receptor (398 aa).

The Extracellular portion of the chain corresponds to 1-32 (MGTCDIVTEANISSGPESNTTGITAFSMPSWQ). N-linked (GlcNAc...) asparagine glycans are attached at residues N11 and N19. A helical membrane pass occupies residues 33-56 (LALWATAYLALVLVAVTGNAIVIW). At 57-69 (IILAHRRMRTVTN) the chain is on the cytoplasmic side. Residues 70–90 (YFIVNLALADLCMAAFNAAFN) traverse the membrane as a helical segment. Residues 91–107 (FVYASHNIWYFGRAFCY) are Extracellular-facing. A disulfide bridge connects residues C106 and C181. Residues 108 to 129 (FQNLFPITAMFVSIYSMTAIAA) form a helical membrane-spanning segment. The Cytoplasmic segment spans residues 130 to 149 (DRYMAIVHPFQPRLSAPSTK). The helical transmembrane segment at 150–170 (AVIAGIWLVALALASPQCFYS) threads the bilayer. Residues 171-196 (TVTMDQGATKCVVAWPEDSGGKTLLL) are Extracellular-facing. Residues 197–218 (YHLVVIALIYFLPLAVMFVAYS) traverse the membrane as a helical segment. Over 219–251 (VIGLTLWRRAVPGHQAHGANLRHLQAMKKFVKT) the chain is Cytoplasmic. A helical transmembrane segment spans residues 252-272 (MVLVVLTFAICWLPYHLYFIL). The Extracellular segment spans residues 273-290 (GSFQEDIYCHKFIQQVYL). A helical membrane pass occupies residues 291–310 (ALFWLAMSSTMYNPIIYCCL). The Cytoplasmic segment spans residues 311 to 398 (NHRFRSGFRL…LAPTKTHVEI (88 aa)). Residue C324 is the site of S-palmitoyl cysteine attachment.

This sequence belongs to the G-protein coupled receptor 1 family.

Its subcellular location is the cell membrane. In terms of biological role, this is a receptor for the tachykinin neuropeptide substance K (neurokinin A). It is associated with G proteins that activate a phosphatidylinositol-calcium second messenger system. The rank order of affinity of this receptor to tachykinins is: substance K &gt; neuromedin-K &gt; substance P. The protein is Substance-K receptor (TACR2) of Homo sapiens (Human).